The sequence spans 275 residues: Putative phosphoenolpyruvate synthase regulatory protein (275 aa).

153-160 (GVSRTGKT) contacts ADP.

This sequence belongs to the pyruvate, phosphate/water dikinase regulatory protein family. PSRP subfamily.

It catalyses the reaction [pyruvate, water dikinase] + ADP = [pyruvate, water dikinase]-phosphate + AMP + H(+). The enzyme catalyses [pyruvate, water dikinase]-phosphate + phosphate + H(+) = [pyruvate, water dikinase] + diphosphate. Functionally, bifunctional serine/threonine kinase and phosphorylase involved in the regulation of the phosphoenolpyruvate synthase (PEPS) by catalyzing its phosphorylation/dephosphorylation. In Nitrosomonas europaea (strain ATCC 19718 / CIP 103999 / KCTC 2705 / NBRC 14298), this protein is Putative phosphoenolpyruvate synthase regulatory protein.